Consider the following 308-residue polypeptide: tRNA pseudouridine synthase B (308 aa).

Residue D47 is the Nucleophile of the active site.

This sequence belongs to the pseudouridine synthase TruB family. Type 1 subfamily.

It carries out the reaction uridine(55) in tRNA = pseudouridine(55) in tRNA. Its function is as follows. Responsible for synthesis of pseudouridine from uracil-55 in the psi GC loop of transfer RNAs. This chain is tRNA pseudouridine synthase B, found in Xanthomonas oryzae pv. oryzae (strain MAFF 311018).